A 154-amino-acid chain; its full sequence is 6,7-dimethyl-8-ribityllumazine synthase (154 aa).

5-amino-6-(D-ribitylamino)uracil-binding positions include F23, 57–59 (AFE), and 81–83 (AVI). A (2S)-2-hydroxy-3-oxobutyl phosphate-binding site is contributed by 86–87 (ST). H89 functions as the Proton donor in the catalytic mechanism. 5-amino-6-(D-ribitylamino)uracil is bound at residue F114. Residue R128 participates in (2S)-2-hydroxy-3-oxobutyl phosphate binding.

This sequence belongs to the DMRL synthase family.

The enzyme catalyses (2S)-2-hydroxy-3-oxobutyl phosphate + 5-amino-6-(D-ribitylamino)uracil = 6,7-dimethyl-8-(1-D-ribityl)lumazine + phosphate + 2 H2O + H(+). Its pathway is cofactor biosynthesis; riboflavin biosynthesis; riboflavin from 2-hydroxy-3-oxobutyl phosphate and 5-amino-6-(D-ribitylamino)uracil: step 1/2. Catalyzes the formation of 6,7-dimethyl-8-ribityllumazine by condensation of 5-amino-6-(D-ribitylamino)uracil with 3,4-dihydroxy-2-butanone 4-phosphate. This is the penultimate step in the biosynthesis of riboflavin. The polypeptide is 6,7-dimethyl-8-ribityllumazine synthase (Syntrophotalea carbinolica (strain DSM 2380 / NBRC 103641 / GraBd1) (Pelobacter carbinolicus)).